Reading from the N-terminus, the 278-residue chain is 4-hydroxy-tetrahydrodipicolinate reductase (278 aa).

NAD(+) is bound by residues 13–18 and 111–113; these read GAAGKM and GTT. The Proton donor/acceptor role is filled by H167. H168 contributes to the (S)-2,3,4,5-tetrahydrodipicolinate binding site. The active-site Proton donor is the K171. 177-178 provides a ligand contact to (S)-2,3,4,5-tetrahydrodipicolinate; that stretch reads GT.

It belongs to the DapB family.

The protein localises to the cytoplasm. It carries out the reaction (S)-2,3,4,5-tetrahydrodipicolinate + NAD(+) + H2O = (2S,4S)-4-hydroxy-2,3,4,5-tetrahydrodipicolinate + NADH + H(+). The catalysed reaction is (S)-2,3,4,5-tetrahydrodipicolinate + NADP(+) + H2O = (2S,4S)-4-hydroxy-2,3,4,5-tetrahydrodipicolinate + NADPH + H(+). It functions in the pathway amino-acid biosynthesis; L-lysine biosynthesis via DAP pathway; (S)-tetrahydrodipicolinate from L-aspartate: step 4/4. Catalyzes the conversion of 4-hydroxy-tetrahydrodipicolinate (HTPA) to tetrahydrodipicolinate. This Nostoc sp. (strain PCC 7120 / SAG 25.82 / UTEX 2576) protein is 4-hydroxy-tetrahydrodipicolinate reductase.